A 523-amino-acid chain; its full sequence is Apoptosis inhibitor 5 (523 aa).

The tract at residues 1-360 (MPTVEELYRN…HQLGRKLPDF (360 aa)) is ARM-like and Heat-like helical repeats. Residues 446–523 (VQKADANQKR…RGNRSRGRIY (78 aa)) form a disordered region. The short motif at 454–475 (KRTSEDTTSSSPPKKASAGPKR) is the Nuclear localization signal element. The segment covering 460-471 (TTSSSPPKKASA) has biased composition (low complexity). Over residues 487-497 (KYSSNLGSFSY) the composition is skewed to polar residues. The span at 502–515 (GFRGGRGRGWGGRG) shows a compositional bias: gly residues.

Belongs to the API5 family. Monomer.

The protein localises to the nucleus. It localises to the cytoplasm. Its function is as follows. Antiapoptotic factor that may have a role in protein assembly. The protein is Apoptosis inhibitor 5 (API5) of Gallus gallus (Chicken).